The chain runs to 355 residues: Ataxin-3-like protein (355 aa).

In terms of domain architecture, Josephin spans 1–180 (MDFIFHEKQE…DCEADQLLQI (180 aa)). C14 functions as the Nucleophile in the catalytic mechanism. H119 functions as the Proton acceptor in the catalytic mechanism. Residue N134 is part of the active site. Disordered stretches follow at residues 209 to 230 (LEKV…EDFQ) and 253 to 331 (LSMQ…DISE). Positions 215–228 (ESDESGTSDQDEED) are enriched in acidic residues. 2 UIM domains span residues 224–243 (QDEE…TNRE) and 244–258 (DEHL…MQGS). The segment covering 253 to 276 (LSMQGSSGNTSQDLPKTSCVTPAS) has biased composition (polar residues). The segment covering 278-293 (QPKKIKEDYFEKHQQE) has biased composition (basic and acidic residues).

In terms of tissue distribution, widely expressed.

It localises to the nucleus. The catalysed reaction is Thiol-dependent hydrolysis of ester, thioester, amide, peptide and isopeptide bonds formed by the C-terminal Gly of ubiquitin (a 76-residue protein attached to proteins as an intracellular targeting signal).. In terms of biological role, deubiquitinating enzyme that cleaves both 'Lys-48'-linked and 'Lys-63'-linked poly-ubiquitin chains (in vitro). Acts as a deubiquitinating enzyme for the transcription factor KLF5, playing a role in the regulation of KLF5 stability. This Homo sapiens (Human) protein is Ataxin-3-like protein.